Reading from the N-terminus, the 477-residue chain is Tripartite motif-containing protein 72 (477 aa).

Residues Leu-14, Pro-17, Pro-29, Cys-31, Thr-34, Gln-37, Thr-53, Pro-56, Gly-86, Leu-89, Val-97, Glu-100, Leu-105, Gly-108, Gly-114, and Lys-117 each coordinate Zn(2+). Residues 16–59 (CPLCLELFRAPVTPECGHTFCQGCLTGAPKNQDQNGSTPCPTCQ) form an RING-type zinc finger. The segment at 83–124 (VPKGHCLEHLDPLSVYCEQDKELICGVCASLGKHKGHNIITA) adopts a B box-type zinc-finger fold. Residues 135-232 (LPQQQVILQE…QMDGVLKDVE (98 aa)) are a coiled coil. Positions 272–476 (DEFKFQVWRK…LKIFYPPAEQ (205 aa)) constitute a B30.2/SPRY domain.

This sequence belongs to the TRIM/RBCC family. Homodimer. Homooligomer; disulfide-linked. Oligomerizes on the phospholipid membrane. Disulfide bond formation at Cys-244 occurs in case of membrane damage that cause the entry of the oxidized milieu of the extracellular space, resulting in homooligomerization.

It localises to the cell membrane. The protein resides in the sarcolemma. The protein localises to the cytoplasmic vesicle membrane. It catalyses the reaction S-ubiquitinyl-[E2 ubiquitin-conjugating enzyme]-L-cysteine + [acceptor protein]-L-lysine = [E2 ubiquitin-conjugating enzyme]-L-cysteine + N(6)-ubiquitinyl-[acceptor protein]-L-lysine.. It participates in protein modification; protein ubiquitination. Its activity is regulated as follows. Specifically binds phosphatidylserine. The binding to phospholipids enhances ubiquitination activity. In terms of biological role, muscle-specific E3 ubiquitin-protein ligase that plays a central role in cell membrane repair by nucleating the assembly of the repair machinery at injury sites. Acts as a sensor of oxidation: upon membrane damage, entry of extracellular oxidative environment results in disulfide bond formation and homooligomerization at the injury site. This oligomerization acts as a nucleation site for recruitment of TRIM72-containing vesicles to the injury site, leading to membrane patch formation. Probably acts upstream of the Ca(2+)-dependent membrane resealing process. Required for transport of DYSF to sites of cell injury during repair patch formation. Regulates membrane budding and exocytosis. May be involved in the regulation of the mobility of KCNB1-containing endocytic vesicles. This chain is Tripartite motif-containing protein 72 (trim72), found in Xenopus tropicalis (Western clawed frog).